The chain runs to 206 residues: Max dimerization protein 3 (206 aa).

The interaction with SIN3A and SIN3B stretch occupies residues 8-25 (IQVLLQAAEFLERREREA). 2 disordered regions span residues 25–67 (AEHG…ELEK) and 146–171 (RERLRADSLDSSGLSSERSDSDQEEL). In terms of domain architecture, bHLH spans 57-109 (SGRSVHNELEKRRRAQLKRCLERLKQQMPLGADCARYTTLSLLRRARMHIQKL).

Efficient DNA binding requires dimerization with another bHLH protein. Binds DNA as a heterodimer with MAX. Interacts with SIN3A AND SIN3B. Interacts with RNF17.

It localises to the nucleus. Its function is as follows. Transcriptional repressor. Binds with MAX to form a sequence-specific DNA-binding protein complex which recognizes the core sequence 5'-CAC[GA]TG-3'. Antagonizes MYC transcriptional activity by competing for MAX and suppresses MYC dependent cell transformation. This chain is Max dimerization protein 3 (MXD3), found in Homo sapiens (Human).